A 126-amino-acid polypeptide reads, in one-letter code: Large-conductance mechanosensitive channel (126 aa).

Transmembrane regions (helical) follow at residues 14 to 34 (VLDL…VKSL) and 69 to 89 (GAFL…FLLV).

This sequence belongs to the MscL family. In terms of assembly, homopentamer.

It is found in the cell membrane. Channel that opens in response to stretch forces in the membrane lipid bilayer. May participate in the regulation of osmotic pressure changes within the cell. The polypeptide is Large-conductance mechanosensitive channel (Leuconostoc citreum (strain KM20)).